We begin with the raw amino-acid sequence, 361 residues long: RLA class I histocompatibility antigen, alpha chain 19-1 (361 aa).

Residues 1 to 24 (MGSIPPRTLLLLLAGALTLKDTQA) form the signal peptide. The segment at 25-114 (GSHSMRYFYT…ALRYYNQSAA (90 aa)) is alpha-1. The Extracellular segment spans residues 25–308 (GSHSMRYFYT…EPPAQPTALI (284 aa)). N110 carries an N-linked (GlcNAc...) asparagine glycan. Residues 115-206 (GSHTFQTMFG…EMGKETLQRA (92 aa)) form an alpha-2 region. Disulfide bonds link C125–C188 and C227–C283. The segment at 207-298 (DPPKAHVTHH…GLPEPLTLTW (92 aa)) is alpha-3. Positions 209-297 (PKAHVTHHPA…EGLPEPLTLT (89 aa)) constitute an Ig-like C1-type domain. Residues 299–308 (EPPAQPTALI) are connecting peptide. Residues 309-329 (VGIVAGVLGVLLILGAVVAVV) form a helical membrane-spanning segment. Topologically, residues 330–361 (RRKKHSSDGKGGRYTPAAGGHRDQGSDDSLMP) are cytoplasmic. The disordered stretch occupies residues 335–361 (SSDGKGGRYTPAAGGHRDQGSDDSLMP). A phosphoserine mark is found at S355 and S358.

The protein belongs to the MHC class I family. In terms of assembly, heterodimer of an alpha chain and a beta chain (beta-2-microglobulin).

The protein localises to the membrane. Involved in the presentation of foreign antigens to the immune system. This Oryctolagus cuniculus (Rabbit) protein is RLA class I histocompatibility antigen, alpha chain 19-1.